A 178-amino-acid chain; its full sequence is Large ribosomal subunit protein uL6 (178 aa).

It belongs to the universal ribosomal protein uL6 family. Part of the 50S ribosomal subunit.

Its function is as follows. This protein binds to the 23S rRNA, and is important in its secondary structure. It is located near the subunit interface in the base of the L7/L12 stalk, and near the tRNA binding site of the peptidyltransferase center. The protein is Large ribosomal subunit protein uL6 of Streptococcus pyogenes serotype M3 (strain ATCC BAA-595 / MGAS315).